The sequence spans 131 residues: Sulfurtransferase TusD (131 aa).

Catalysis depends on C81, which acts as the Cysteine persulfide intermediate.

Belongs to the DsrE/TusD family. Heterohexamer, formed by a dimer of trimers. The hexameric TusBCD complex contains 2 copies each of TusB, TusC and TusD. The TusBCD complex interacts with TusE.

It localises to the cytoplasm. Functionally, part of a sulfur-relay system required for 2-thiolation of 5-methylaminomethyl-2-thiouridine (mnm(5)s(2)U) at tRNA wobble positions. Accepts sulfur from TusA and transfers it in turn to TusE. The chain is Sulfurtransferase TusD from Yersinia pseudotuberculosis serotype O:1b (strain IP 31758).